We begin with the raw amino-acid sequence, 306 residues long: Protein translocase subunit SecF (306 aa).

6 helical membrane-spanning segments follow: residues 17–37, 134–154, 158–178, 185–205, 232–254, and 268–288; these read AFAV…TKGI, GLGM…RFQW, LGAI…LSFF, TVLA…IVIF, LLRT…FFGG, and VMAG…WLNL.

Belongs to the SecD/SecF family. SecF subfamily. Forms a complex with SecD. Part of the essential Sec protein translocation apparatus which comprises SecA, SecYEG and auxiliary proteins SecDF-YajC and YidC.

Its subcellular location is the cell inner membrane. Its function is as follows. Part of the Sec protein translocase complex. Interacts with the SecYEG preprotein conducting channel. SecDF uses the proton motive force (PMF) to complete protein translocation after the ATP-dependent function of SecA. This is Protein translocase subunit SecF from Pseudomonas aeruginosa (strain ATCC 15692 / DSM 22644 / CIP 104116 / JCM 14847 / LMG 12228 / 1C / PRS 101 / PAO1).